Here is a 90-residue protein sequence, read N- to C-terminus: Small ribosomal subunit protein uS17 (90 aa).

This sequence belongs to the universal ribosomal protein uS17 family. As to quaternary structure, part of the 30S ribosomal subunit.

In terms of biological role, one of the primary rRNA binding proteins, it binds specifically to the 5'-end of 16S ribosomal RNA. This Burkholderia multivorans (strain ATCC 17616 / 249) protein is Small ribosomal subunit protein uS17.